A 161-amino-acid polypeptide reads, in one-letter code: Nucleotide-binding protein ABO_0048 (161 aa).

The protein belongs to the YajQ family.

In terms of biological role, nucleotide-binding protein. This chain is Nucleotide-binding protein ABO_0048, found in Alcanivorax borkumensis (strain ATCC 700651 / DSM 11573 / NCIMB 13689 / SK2).